The primary structure comprises 244 residues: Rho-related GTP-binding protein RhoE (244 aa).

Gly-30–Thr-37 lines the GTP pocket. The Effector region signature appears at Tyr-52–Tyr-60. GTP is bound by residues Asp-77 to Ser-81 and Cys-135 to Asp-138. Cys-241 is subject to Cysteine methyl ester. Cys-241 carries the S-farnesyl cysteine lipid modification. Residues Thr-242–Met-244 constitute a propeptide, removed in mature form.

This sequence belongs to the small GTPase superfamily. Rho family. In terms of assembly, binds ROCK1. Interacts with UBXD5. Ubiquitous.

It is found in the golgi apparatus membrane. Its function is as follows. Binds GTP but lacks intrinsic GTPase activity and is resistant to Rho-specific GTPase-activating proteins. The protein is Rho-related GTP-binding protein RhoE (RND3) of Homo sapiens (Human).